A 141-amino-acid polypeptide reads, in one-letter code: 6,7-dimethyl-8-ribityllumazine synthase (141 aa).

5-amino-6-(D-ribitylamino)uracil-binding positions include Phe-13, 45–47 (SFE), and 69–71 (AII). (2S)-2-hydroxy-3-oxobutyl phosphate is bound at residue 74–75 (DT). His-77 (proton donor) is an active-site residue. Leu-102 provides a ligand contact to 5-amino-6-(D-ribitylamino)uracil. Arg-117 contributes to the (2S)-2-hydroxy-3-oxobutyl phosphate binding site.

It belongs to the DMRL synthase family.

It carries out the reaction (2S)-2-hydroxy-3-oxobutyl phosphate + 5-amino-6-(D-ribitylamino)uracil = 6,7-dimethyl-8-(1-D-ribityl)lumazine + phosphate + 2 H2O + H(+). Its pathway is cofactor biosynthesis; riboflavin biosynthesis; riboflavin from 2-hydroxy-3-oxobutyl phosphate and 5-amino-6-(D-ribitylamino)uracil: step 1/2. In terms of biological role, catalyzes the formation of 6,7-dimethyl-8-ribityllumazine by condensation of 5-amino-6-(D-ribitylamino)uracil with 3,4-dihydroxy-2-butanone 4-phosphate. This is the penultimate step in the biosynthesis of riboflavin. In Methanopyrus kandleri (strain AV19 / DSM 6324 / JCM 9639 / NBRC 100938), this protein is 6,7-dimethyl-8-ribityllumazine synthase.